The chain runs to 335 residues: Nod factor export ATP-binding protein I (335 aa).

Positions 37-267 constitute an ABC transporter domain; it reads IDVASVTKSY…KIGCQVIEIY (231 aa). 69–76 contacts ATP; the sequence is GPNGAGKS.

It belongs to the ABC transporter superfamily. Lipooligosaccharide exporter (TC 3.A.1.102) family. In terms of assembly, the complex is composed of two ATP-binding proteins (NodI) and two transmembrane proteins (NodJ).

Its subcellular location is the cell inner membrane. Part of the ABC transporter complex NodIJ involved in the export of the nodulation factors (Nod factors), the bacterial signal molecules that induce symbiosis and subsequent nodulation induction. Nod factors are LCO (lipo-chitin oligosaccharide), a modified beta-1,4-linked N-acetylglucosamine oligosaccharide. This subunit is responsible for energy coupling to the transport system. This is Nod factor export ATP-binding protein I from Rhizobium meliloti (strain 1021) (Ensifer meliloti).